A 485-amino-acid polypeptide reads, in one-letter code: Betaine aldehyde dehydrogenase (485 aa).

K(+) contacts are provided by T23, I24, and D90. 147–149 (GAW) lines the NAD(+) pocket. The Charge relay system role is filled by K159. Residues 173 to 176 (KPSE) and 226 to 229 (EVGT) each bind NAD(+). Residue L241 participates in K(+) binding. E247 (proton acceptor) is an active-site residue. NAD(+)-binding residues include G249, C281, and E382. The active-site Nucleophile is C281. C281 carries the post-translational modification Cysteine sulfenic acid (-SOH). 2 residues coordinate K(+): K452 and G455. E459 acts as the Charge relay system in catalysis.

This sequence belongs to the aldehyde dehydrogenase family. Dimer of dimers. K(+) is required as a cofactor.

The enzyme catalyses betaine aldehyde + NAD(+) + H2O = glycine betaine + NADH + 2 H(+). It participates in amine and polyamine biosynthesis; betaine biosynthesis via choline pathway; betaine from betaine aldehyde: step 1/1. Its function is as follows. Involved in the biosynthesis of the osmoprotectant glycine betaine. Catalyzes the irreversible oxidation of betaine aldehyde to the corresponding acid. The chain is Betaine aldehyde dehydrogenase from Marinomonas sp. (strain MWYL1).